The primary structure comprises 275 residues: Large ribosomal subunit protein uL2 (275 aa).

A disordered region spans residues 210-275; that stretch reads GRNRHRGIRP…DKLIISRKKK (66 aa). Over residues 257–275 the composition is skewed to basic residues; that stretch reads FKTRKKKASDKLIISRKKK.

Belongs to the universal ribosomal protein uL2 family. In terms of assembly, part of the 50S ribosomal subunit. Forms a bridge to the 30S subunit in the 70S ribosome.

Its function is as follows. One of the primary rRNA binding proteins. Required for association of the 30S and 50S subunits to form the 70S ribosome, for tRNA binding and peptide bond formation. It has been suggested to have peptidyltransferase activity; this is somewhat controversial. Makes several contacts with the 16S rRNA in the 70S ribosome. This chain is Large ribosomal subunit protein uL2, found in Helicobacter hepaticus (strain ATCC 51449 / 3B1).